A 912-amino-acid chain; its full sequence is MLYSPLYQSIRLILFGALGLSSLTVSAAINQTDSMMPEPLVTDSSNQYADDESIQESLKRLAEFYERTPDTNVATSNNTGTNVSDEQSNIQNSLTPVTTNIPTVGSNLRLLPHTVDSAARCEGQWVYPKKNPNYQRAVNEAGASNGQPAPNLNGLPNNQAPLFAESDYGYYDNVDYAELSGNVIIDQGTQHIEAEKIVLDLSNGVAAAQGKVMFTDQATGNASATQTQDRVQKNGKTSLTDKAAQGGLIGVADNLNYNTETGQSTATNVAFASVELQAHGYAKRLNRPNESQYELDEVMYSTCPPTNRKWQFDAKSIDLDTETGRGEAYNTTFRIADVPVFYLPYFNFPIDSRRGSGFLLPNASISSENGLEVDVPYYFNLAPNYDATLSTHIYTTRNPMLSGEFRYLTENYGEGIFNGSYLPNDKEYDGEDRRSLFYDHYWSSTSIPRLSGEAKYSHVSDADYLNDFDTLGLSDNTLNLARRAQLNYYNDYVDGELKVETFQTLDALNNNGQMLQDKDKPYSRLPQLNLDYRLPWAKNFDITGVSDSAYFKKSIDDGSENEKSGTRFYNKLSASYPMENSWGYIKPKLSLQHLFTSYDKDSLVDNSLDKDDGNQSVFVPQASIDAGLHFYQAGSPFGAFDDTLGGYRLLSPRLKYTYSPFKDQNNIPNFNTRIASINYEQLFSDSWFLGHDRLQDLHAFTPGINYRYIDATGVTRFDGSIAEQFYIDDGGVTLDNTKPVFTSSSSGLVWDTSTQPYNNVWVDVSGALTNSYDLNYITTELRYQPSDNSLFNVGFIKRQRDENTNQLPLSALTASAVFPINNNWRVLAQGQYDYNRNQMLDSLIGIDYEDCCFGFAVYGRRYYNDLNIADKPTQAIMAEVRLSGLGSGSSRLTRLLADKVLGFEPVQSAWKD.

The N-terminal stretch at 1-27 (MLYSPLYQSIRLILFGALGLSSLTVSA) is a signal peptide.

Belongs to the LptD family. Component of the lipopolysaccharide transport and assembly complex. Interacts with LptE and LptA.

It localises to the cell outer membrane. In terms of biological role, together with LptE, is involved in the assembly of lipopolysaccharide (LPS) at the surface of the outer membrane. This Psychrobacter arcticus (strain DSM 17307 / VKM B-2377 / 273-4) protein is LPS-assembly protein LptD.